The primary structure comprises 491 residues: Spermatogenesis-defective protein 39 homolog (491 aa).

A Phosphothreonine modification is found at T21. Positions 72–81 (KETAGSSGST) are enriched in polar residues. A disordered region spans residues 72–101 (KETAGSSGSTPEGREQLKGRNSFYTQLPKP). T115 carries the phosphothreonine modification. Phosphoserine is present on residues S119, S122, and S128. A disordered region spans residues 121 to 141 (QSLSDALSDTPAKSYAPELGR). T130 carries the phosphothreonine modification.

It belongs to the SPE39 family. In terms of assembly, interacts with VPS33B. Associates with the homotypic fusion and vacuole protein sorting (HOPS) complex; impaired by VPS33B. Interacts with RAB11A.

It localises to the cytoplasm. It is found in the cytoplasmic vesicle. Its subcellular location is the early endosome. The protein resides in the recycling endosome. The protein localises to the late endosome. Functionally, proposed to be involved in endosomal maturation implicating in part VPS33B. In epithelial cells, the VPS33B:VIPAS39 complex may play a role in the apical RAB11A-dependent recycling pathway and in the maintenance of the apical-basolateral polarity. May play a role in lysosomal trafficking, probably via association with the core HOPS complex in a discrete population of endosomes; the functions seems to be independent of VPS33B. May play a role in vesicular trafficking during spermatogenesis. May be involved in direct or indirect transcriptional regulation of E-cadherin. In Mus musculus (Mouse), this protein is Spermatogenesis-defective protein 39 homolog (Vipas39).